The sequence spans 458 residues: UPF0210 protein MmarC5_0151 (458 aa).

This sequence belongs to the UPF0210 family.

The polypeptide is UPF0210 protein MmarC5_0151 (Methanococcus maripaludis (strain C5 / ATCC BAA-1333)).